Here is a 55-residue protein sequence, read N- to C-terminus: Spermatid nuclear transition protein 1 (55 aa).

Basic residues predominate over residues 1 to 42 (MSTSRKLKTHGMRRGKNRAPHKGVKRGGSKRKYRKSVLKSRK). A disordered region spans residues 1–55 (MSTSRKLKTHGMRRGKNRAPHKGVKRGGSKRKYRKSVLKSRKRGDDASRNYRSHL). Phosphoserine is present on residues serine 36 and serine 40.

This sequence belongs to the nuclear transition protein 1 family. As to expression, testis-specific.

The protein localises to the nucleus. It localises to the chromosome. Its function is as follows. Plays a key role in the replacement of histones to protamine in the elongating spermatids of mammals. In condensing spermatids, loaded onto the nucleosomes, where it promotes the recruitment and processing of protamines, which are responsible for histone eviction. The histone H2AB1-H2BC1/TH2B dimer is required for loading of TNP1 onto chromatin. This Mus musculus (Mouse) protein is Spermatid nuclear transition protein 1.